A 499-amino-acid chain; its full sequence is Glycerol kinase (499 aa).

T12 serves as a coordination point for ADP. ATP-binding residues include T12, T13, and S14. T12 is a sn-glycerol 3-phosphate binding site. R16 contacts ADP. R82, E83, Y134, and D240 together coordinate sn-glycerol 3-phosphate. Residues R82, E83, Y134, D240, and Q241 each contribute to the glycerol site. T262 and G306 together coordinate ADP. ATP is bound by residues T262, G306, Q310, and G412. The ADP site is built by G412 and N416.

It belongs to the FGGY kinase family.

It catalyses the reaction glycerol + ATP = sn-glycerol 3-phosphate + ADP + H(+). It functions in the pathway polyol metabolism; glycerol degradation via glycerol kinase pathway; sn-glycerol 3-phosphate from glycerol: step 1/1. Inhibited by fructose 1,6-bisphosphate (FBP). Functionally, key enzyme in the regulation of glycerol uptake and metabolism. Catalyzes the phosphorylation of glycerol to yield sn-glycerol 3-phosphate. This Nocardia farcinica (strain IFM 10152) protein is Glycerol kinase.